We begin with the raw amino-acid sequence, 184 residues long: Large ribosomal subunit protein uL22A (184 aa).

Lys46 is covalently cross-linked (Glycyl lysine isopeptide (Lys-Gly) (interchain with G-Cter in ubiquitin)). The residue at position 70 (Thr70) is a Phosphothreonine.

It belongs to the universal ribosomal protein uL22 family. As to quaternary structure, component of the large ribosomal subunit (LSU). Mature yeast ribosomes consist of a small (40S) and a large (60S) subunit. The 40S small subunit contains 1 molecule of ribosomal RNA (18S rRNA) and 33 different proteins (encoded by 57 genes). The large 60S subunit contains 3 rRNA molecules (25S, 5.8S and 5S rRNA) and 46 different proteins (encoded by 81 genes). uL22 is associated with the polypeptide exit tunnel.

It is found in the cytoplasm. In terms of biological role, component of the ribosome, a large ribonucleoprotein complex responsible for the synthesis of proteins in the cell. The small ribosomal subunit (SSU) binds messenger RNAs (mRNAs) and translates the encoded message by selecting cognate aminoacyl-transfer RNA (tRNA) molecules. The large subunit (LSU) contains the ribosomal catalytic site termed the peptidyl transferase center (PTC), which catalyzes the formation of peptide bonds, thereby polymerizing the amino acids delivered by tRNAs into a polypeptide chain. The nascent polypeptides leave the ribosome through a tunnel in the LSU and interact with protein factors that function in enzymatic processing, targeting, and the membrane insertion of nascent chains at the exit of the ribosomal tunnel. This is Large ribosomal subunit protein uL22A from Saccharomyces cerevisiae (strain ATCC 204508 / S288c) (Baker's yeast).